A 102-amino-acid polypeptide reads, in one-letter code: Putative pterin-4-alpha-carbinolamine dehydratase (102 aa).

It belongs to the pterin-4-alpha-carbinolamine dehydratase family.

It catalyses the reaction (4aS,6R)-4a-hydroxy-L-erythro-5,6,7,8-tetrahydrobiopterin = (6R)-L-erythro-6,7-dihydrobiopterin + H2O. The sequence is that of Putative pterin-4-alpha-carbinolamine dehydratase from Burkholderia vietnamiensis (strain G4 / LMG 22486) (Burkholderia cepacia (strain R1808)).